A 207-amino-acid polypeptide reads, in one-letter code: MDSTKSTEETAINIPRESSSTKHKIAVAAVKAVATPHKRGGMKRGVAIFDFILRICALAAALAATATMGTTDQTLPFFTQFFQFQASYDDLPTFTFFVIANAIASGYLVLSLPFSIVAIVRPHVTGVKLLLLILDTVLVAFTTAAAASAAAIVYLAHNGNSNTNWFAICQQFNDFCQRTSGAVVASFIAAAIFIFLVVLSAVALRRH.

The Cytoplasmic segment spans residues 1 to 45; it reads MDSTKSTEETAINIPRESSSTKHKIAVAAVKAVATPHKRGGMKRG. Residues 46-66 form a helical membrane-spanning segment; the sequence is VAIFDFILRICALAAALAATA. At 67–95 the chain is on the extracellular side; the sequence is TMGTTDQTLPFFTQFFQFQASYDDLPTFT. A helical transmembrane segment spans residues 96–116; it reads FFVIANAIASGYLVLSLPFSI. Topologically, residues 117–128 are cytoplasmic; it reads VAIVRPHVTGVK. Residues 129-149 traverse the membrane as a helical segment; sequence LLLLILDTVLVAFTTAAAASA. The Extracellular segment spans residues 150–181; it reads AAIVYLAHNGNSNTNWFAICQQFNDFCQRTSG. A helical membrane pass occupies residues 182–202; sequence AVVASFIAAAIFIFLVVLSAV. Residues 203-207 lie on the Cytoplasmic side of the membrane; that stretch reads ALRRH.

Belongs to the Casparian strip membrane proteins (CASP) family. In terms of assembly, homodimer and heterodimers.

The protein resides in the cell membrane. In terms of biological role, regulates membrane-cell wall junctions and localized cell wall deposition. Required for establishment of the Casparian strip membrane domain (CSD) and the subsequent formation of Casparian strips, a cell wall modification of the root endodermis that determines an apoplastic barrier between the intraorganismal apoplasm and the extraorganismal apoplasm and prevents lateral diffusion. In Erythranthe guttata (Yellow monkey flower), this protein is Casparian strip membrane protein 3.